Reading from the N-terminus, the 125-residue chain is Fluoride-specific ion channel FluC (125 aa).

The next 3 membrane-spanning stretches (helical) occupy residues 36–56 (GTIFVNVVGSFLLSFLMFLSI), 65–85 (FILFFGTGFLGAFTTFSTFAY), and 99–119 (IIYFIANIFLGFFAAILGMFL). 2 residues coordinate Na(+): Gly-75 and Thr-78.

The protein belongs to the fluoride channel Fluc/FEX (TC 1.A.43) family.

The protein resides in the cell inner membrane. The enzyme catalyses fluoride(in) = fluoride(out). Na(+) is not transported, but it plays an essential structural role and its presence is essential for fluoride channel function. Functionally, fluoride-specific ion channel. Important for reducing fluoride concentration in the cell, thus reducing its toxicity. This Thermosipho africanus (strain TCF52B) protein is Fluoride-specific ion channel FluC.